The sequence spans 360 residues: Putative agmatine deiminase (360 aa).

Cysteine 353 acts as the Amidino-cysteine intermediate in catalysis.

Belongs to the agmatine deiminase family.

The enzyme catalyses agmatine + H2O = N-carbamoylputrescine + NH4(+). This is Putative agmatine deiminase from Vibrio parahaemolyticus serotype O3:K6 (strain RIMD 2210633).